Here is a 118-residue protein sequence, read N- to C-terminus: Elongin-B (118 aa).

Position 1 is an N-acetylmethionine (M1). The 79-residue stretch at 1-79 (MDVFLMIRRH…QAPATVGLAF (79 aa)) folds into the Ubiquitin-like domain. Residue T84 is modified to Phosphothreonine. Residues 91 to 118 (EPFSSPPELPDVMKPQDSGGSANEQAVQ) are disordered. Phosphoserine occurs at positions 108 and 111. Residues 108 to 118 (SGGSANEQAVQ) are compositionally biased toward polar residues.

This sequence belongs to the Elongin B family. Heterotrimer of an A (ELOA, ELOA2 or ELOA3P), ELOB and ELOC subunit. The elongin BC complex interacts with EPOP; leading to recruit the elongin BC complex to Polycomb group (PcG) target genes, thereby restricting excessive activity of the PRC2/EED-EZH2 complex. Component of multiple cullin-RING E3 ubiquitin-protein ligase complexes composed of Elongin BC (ELOB and ELOC), a cullin (either CUL2 or CUL5), a catalytic subunit (either RBX1 or RNF7/RBX2), as well as a substrate adapter protein that can be either ASB2, ASB9, ASB11, KLHDC2, KLHDC3, KLHDC10, APPBP2, FEM1A, FEM1B, FEM1C, LRR1, PCMTD1, SOCS1, SOCS2, SOCS5, SPSB1, SPSB3, ELOA, VHL, WSB1 or RAB40C. As part of the Elongin BC E3 ubiquitin ligase complex; interacts with NRBP1. May also interact with DCUN1D1, DCUN1D2, DCUN1D3 and DCUN1D5. May form oligomers as a KLHDC2/KLHDC3-ELOB-ELOC complex; this interaction is autoinhibitory for the E3 ligase complex as the substrate-binding site of KLHDC2/KLHDC3 is blocked in the oligomer.

The protein localises to the nucleus. Its pathway is protein modification; protein ubiquitination. In terms of biological role, SIII, also known as elongin, is a general transcription elongation factor that increases the RNA polymerase II transcription elongation past template-encoded arresting sites. Subunit A is transcriptionally active and its transcription activity is strongly enhanced by binding to the dimeric complex of the SIII regulatory subunits B and C (elongin BC complex). In embryonic stem cells, the elongin BC complex is recruited by EPOP to Polycomb group (PcG) target genes in order generate genomic region that display both active and repressive chromatin properties, an important feature of pluripotent stem cells. Functionally, core component of multiple cullin-2 and cullin-5-RING E3 ubiquitin-protein ligase complexes (ECS complexes), which mediate the ubiquitination of target proteins. By binding to BC-box motifs it seems to link target recruitment subunits, like VHL and members of the SOCS box family, to Cullin/RBX1 modules that activate E2 ubiquitination enzymes. Component the von Hippel-Lindau ubiquitination complex CBC(VHL). A number of ECS complexes (containing either KLHDC2, KLHDC3, KLHDC10, APPBP2, FEM1A, FEM1B or FEM1C as substrate-recognition component) are part of the DesCEND (destruction via C-end degrons) pathway, which recognizes a C-degron located at the extreme C terminus of target proteins, leading to their ubiquitination and degradation. The ECS(ASB9) complex mediates ubiquitination and degradation of CKB. As part of a multisubunit ubiquitin ligase complex, polyubiquitinates monoubiquitinated POLR2A. ECS(LRR1) ubiquitinates MCM7 and promotes CMG replisome disassembly by VCP and chromatin extraction during S-phase. As part of the ECS(RAB40C) complex, mediates ANKRD28 ubiquitination and degradation, thereby inhibiting protein phosphatase 6 (PP6) complex activity and focal adhesion assembly during cell migration. This chain is Elongin-B, found in Mus musculus (Mouse).